The primary structure comprises 350 residues: Cobalt-precorrin-5B C(1)-methyltransferase (350 aa).

It belongs to the CbiD family.

The catalysed reaction is Co-precorrin-5B + S-adenosyl-L-methionine = Co-precorrin-6A + S-adenosyl-L-homocysteine. It participates in cofactor biosynthesis; adenosylcobalamin biosynthesis; cob(II)yrinate a,c-diamide from sirohydrochlorin (anaerobic route): step 6/10. In terms of biological role, catalyzes the methylation of C-1 in cobalt-precorrin-5B to form cobalt-precorrin-6A. The polypeptide is Cobalt-precorrin-5B C(1)-methyltransferase (Sulfurisphaera tokodaii (strain DSM 16993 / JCM 10545 / NBRC 100140 / 7) (Sulfolobus tokodaii)).